The sequence spans 166 residues: Small ribosomal subunit protein uS5 (166 aa).

An S5 DRBM domain is found at 11–74; that stretch reads LQEKLIAVNR…EKARRNMINV (64 aa).

It belongs to the universal ribosomal protein uS5 family. In terms of assembly, part of the 30S ribosomal subunit. Contacts proteins S4 and S8.

Functionally, with S4 and S12 plays an important role in translational accuracy. Located at the back of the 30S subunit body where it stabilizes the conformation of the head with respect to the body. The protein is Small ribosomal subunit protein uS5 of Haemophilus influenzae (strain 86-028NP).